Consider the following 325-residue polypeptide: tRNA dimethylallyltransferase (325 aa).

16–23 is an ATP binding site; that stretch reads GPTASGKT. Residue 18 to 23 coordinates substrate; that stretch reads TASGKT. Interaction with substrate tRNA stretches follow at residues 41 to 44, 165 to 169, 253 to 258, and 286 to 293; these read DSAL, QRIQR, RCVGYR, and KRQITWLR.

The protein belongs to the IPP transferase family. As to quaternary structure, monomer. Requires Mg(2+) as cofactor.

The catalysed reaction is adenosine(37) in tRNA + dimethylallyl diphosphate = N(6)-dimethylallyladenosine(37) in tRNA + diphosphate. Functionally, catalyzes the transfer of a dimethylallyl group onto the adenine at position 37 in tRNAs that read codons beginning with uridine, leading to the formation of N6-(dimethylallyl)adenosine (i(6)A). In Ralstonia pickettii (strain 12J), this protein is tRNA dimethylallyltransferase.